Consider the following 105-residue polypeptide: Nucleoid-associated protein SaurJH1_0513 (105 aa).

The tract at residues 1 to 33 (MRGGGNMQQMMKQMQKMQKKMAQEQKKLKEERI) is disordered. Positions 7–16 (MQQMMKQMQK) are enriched in low complexity. Over residues 21 to 33 (MAQEQKKLKEERI) the composition is skewed to basic and acidic residues.

It belongs to the YbaB/EbfC family. As to quaternary structure, homodimer.

The protein resides in the cytoplasm. It is found in the nucleoid. Binds to DNA and alters its conformation. May be involved in regulation of gene expression, nucleoid organization and DNA protection. The chain is Nucleoid-associated protein SaurJH1_0513 from Staphylococcus aureus (strain JH1).